Reading from the N-terminus, the 447-residue chain is Sulfoquinovose isomerase (447 aa).

The protein belongs to the SqvD family.

The catalysed reaction is 6-sulfo-beta-D-quinovose = 6-deoxy-6-sulfo-D-fructose. In terms of biological role, part of the sulfo-TK pathway, a D-sulfoquinovose degradation pathway that produces 2-hydroxyethane-1-sulfonate (isethionate). Catalyzes the isomerization of sulfoquinovose (SQ) to 6-deoxy-6-sulfo-D-fructose (SF). This Clostridium sp. (strain MSTE9) protein is Sulfoquinovose isomerase.